The sequence spans 472 residues: tRNA-2-methylthio-N(6)-dimethylallyladenosine synthase (472 aa).

Residues 22 to 138 (RSYWITTFGC…LETLLQQVDS (117 aa)) form the MTTase N-terminal domain. [4Fe-4S] cluster is bound by residues C31, C67, C101, C173, C177, and C180. The region spanning 159–396 (RDSAICGWVN…NALVERNARE (238 aa)) is the Radical SAM core domain. The 69-residue stretch at 399–467 (IRYQGRTEEV…SFSLSGTPLP (69 aa)) folds into the TRAM domain.

The protein belongs to the methylthiotransferase family. MiaB subfamily. In terms of assembly, monomer. The cofactor is [4Fe-4S] cluster.

The protein localises to the cytoplasm. It carries out the reaction N(6)-dimethylallyladenosine(37) in tRNA + (sulfur carrier)-SH + AH2 + 2 S-adenosyl-L-methionine = 2-methylsulfanyl-N(6)-dimethylallyladenosine(37) in tRNA + (sulfur carrier)-H + 5'-deoxyadenosine + L-methionine + A + S-adenosyl-L-homocysteine + 2 H(+). Functionally, catalyzes the methylthiolation of N6-(dimethylallyl)adenosine (i(6)A), leading to the formation of 2-methylthio-N6-(dimethylallyl)adenosine (ms(2)i(6)A) at position 37 in tRNAs that read codons beginning with uridine. This is tRNA-2-methylthio-N(6)-dimethylallyladenosine synthase from Synechococcus sp. (strain CC9902).